Here is a 431-residue protein sequence, read N- to C-terminus: MEPQEEFITTEEVEQEIVPTVEVEQDVPVDIEGENDDDDEMMNDDEEALEVDMSNNSLTYFDKHTDSVFAIGHHPNLPLVCTGGGDNLAHLWTSHSQPPKFAGTLTGYGESVISCSFTSEGGFLVTADMSGKVLVHMGQKGGAQWKLASQMQEVEEIVWLKTHPTIARTFAFGATDGSVWCYQINEQDGSLEQLMSGFVHQQDCSMGEFINTDKGENTLELVTCSLDSTIVAWNCFTGQQLFKITQAEIKGLEAPWISLSLAPETLTKGNSGVVACGSNNGLLAVINCNNGGAILHLSTVIELKPEQDELDASIESISWSSKFSLMAIGLVCGEILLYDTSAWRVRHKFVLEDSVTKLMFDNDDLFASCINGKVYQFNARTGQEKFVCVGHNMGVLDFILLHPVANTGTEQKRKVITAGDEGVSLVFEVPN.

WD repeat units lie at residues 63–102, 107–146, 149–192, 199–243, 309–348, and 350–387; these read KHTD…PKFA, GYGE…AQWK, SQMQ…GSLE, VHQQ…QLFK, ELDA…VRHK, and VLED…EKFV.

As to quaternary structure, interacts strongly with QSR1. Part of an oligomeric protein complex that is loosely associated with ribosomes.

Functionally, may be involved in the late step of 60S ribosomal subunit assembly or modification in the cytoplasm. This is Ribosome assembly protein SQT1 (SQT1) from Saccharomyces cerevisiae (strain ATCC 204508 / S288c) (Baker's yeast).